Reading from the N-terminus, the 565-residue chain is Oxygen-dependent choline dehydrogenase (565 aa).

Position 7–36 (7–36 (DYIICGAGSAGNVLATRLTEDPGVTVLLLE)) interacts with FAD. H474 acts as the Proton acceptor in catalysis.

Belongs to the GMC oxidoreductase family. It depends on FAD as a cofactor.

The enzyme catalyses choline + A = betaine aldehyde + AH2. It carries out the reaction betaine aldehyde + NAD(+) + H2O = glycine betaine + NADH + 2 H(+). Its pathway is amine and polyamine biosynthesis; betaine biosynthesis via choline pathway; betaine aldehyde from choline (cytochrome c reductase route): step 1/1. Its function is as follows. Involved in the biosynthesis of the osmoprotectant glycine betaine. Catalyzes the oxidation of choline to betaine aldehyde and betaine aldehyde to glycine betaine at the same rate. The chain is Oxygen-dependent choline dehydrogenase from Burkholderia pseudomallei (strain K96243).